The primary structure comprises 145 residues: Large ribosomal subunit protein uL16 (145 aa).

It belongs to the universal ribosomal protein uL16 family. As to quaternary structure, part of the 50S ribosomal subunit.

Binds 23S rRNA and is also seen to make contacts with the A and possibly P site tRNAs. This chain is Large ribosomal subunit protein uL16, found in Agathobacter rectalis (strain ATCC 33656 / DSM 3377 / JCM 17463 / KCTC 5835 / VPI 0990) (Eubacterium rectale).